Reading from the N-terminus, the 528-residue chain is DNA primase large subunit (528 aa).

The interval N210–R239 is H-T-H-like motif. [4Fe-4S] cluster contacts are provided by C336, C417, C434, and C474.

It belongs to the eukaryotic-type primase large subunit family. As to quaternary structure, DNA polymerase alpha:primase is a four subunit enzyme complex, which is assembled throughout the cell cycle, and consists of the two DNA polymerase subunits A POL1 and B POL12, and the DNA primase large PRI2 and small PRI1 subunits. Interacts with MCM10. [4Fe-4S] cluster serves as cofactor.

In terms of biological role, DNA primase is the polymerase that synthesizes small RNA primers for the Okazaki fragments made during discontinuous DNA replication. In a complex with DNA polymerase alpha (DNA polymerase alpha:primase) constitutes a replicative polymerase. Both primase components participate in formation of the active center, but the ATP-binding site is exclusively located on p48. The polypeptide is DNA primase large subunit (PRI2) (Saccharomyces cerevisiae (strain ATCC 204508 / S288c) (Baker's yeast)).